Consider the following 90-residue polypeptide: Probable Fe(2+)-trafficking protein (90 aa).

It belongs to the Fe(2+)-trafficking protein family.

Functionally, could be a mediator in iron transactions between iron acquisition and iron-requiring processes, such as synthesis and/or repair of Fe-S clusters in biosynthetic enzymes. This Pasteurella multocida (strain Pm70) protein is Probable Fe(2+)-trafficking protein.